A 393-amino-acid polypeptide reads, in one-letter code: Flap endonuclease 1 (393 aa).

Positions 1-108 are N-domain; sequence MGVLGLSKLL…SELESRRQRA (108 aa). Mg(2+) is bound at residue D34. Position 74 (R74) interacts with DNA. D90 serves as a coordination point for Mg(2+). Positions 99-120 are enriched in basic and acidic residues; the sequence is SELESRRQRAEDAKHEFEKAKE. Residues 99 to 127 form a disordered region; sequence SELESRRQRAEDAKHEFEKAKEEGDDEAM. An I-domain region spans residues 126–257; that stretch reads AMEKMSKRMV…HKAWEGIKKY (132 aa). 4 residues coordinate Mg(2+): E162, E164, D183, and D185. E162 serves as a coordination point for DNA. DNA-binding residues include G235 and D237. Residue D237 coordinates Mg(2+). Positions 340-348 are interaction with PCNA; it reads TQGRLDQFF. A disordered region spans residues 358-393; that stretch reads NSEASTAGTKRNRGAVALPGVLQRKSSSGHKKAVKK. Residues 384–393 are compositionally biased toward basic residues; that stretch reads SSGHKKAVKK.

It belongs to the XPG/RAD2 endonuclease family. FEN1 subfamily. As to quaternary structure, interacts with PCNA. Three molecules of FEN1 bind to one PCNA trimer with each molecule binding to one PCNA monomer. PCNA stimulates the nuclease activity without altering cleavage specificity. The cofactor is Mg(2+). Post-translationally, phosphorylated. Phosphorylation upon DNA damage induces relocalization to the nuclear plasma.

Its subcellular location is the nucleus. The protein localises to the nucleolus. The protein resides in the nucleoplasm. It localises to the mitochondrion. Functionally, structure-specific nuclease with 5'-flap endonuclease and 5'-3' exonuclease activities involved in DNA replication and repair. During DNA replication, cleaves the 5'-overhanging flap structure that is generated by displacement synthesis when DNA polymerase encounters the 5'-end of a downstream Okazaki fragment. It enters the flap from the 5'-end and then tracks to cleave the flap base, leaving a nick for ligation. Also involved in the long patch base excision repair (LP-BER) pathway, by cleaving within the apurinic/apyrimidinic (AP) site-terminated flap. Acts as a genome stabilization factor that prevents flaps from equilibrating into structures that lead to duplications and deletions. Also possesses 5'-3' exonuclease activity on nicked or gapped double-stranded DNA, and exhibits RNase H activity. Also involved in replication and repair of rDNA and in repairing mitochondrial DNA. In Trypanosoma brucei brucei (strain 927/4 GUTat10.1), this protein is Flap endonuclease 1.